The primary structure comprises 302 residues: Sulfate adenylyltransferase subunit 2 (302 aa).

The disordered stretch occupies residues 280 to 302 (RQGRLIDSDQSASMEQKKRQGYF).

This sequence belongs to the PAPS reductase family. CysD subfamily. Heterodimer composed of CysD, the smaller subunit, and CysN.

The enzyme catalyses sulfate + ATP + H(+) = adenosine 5'-phosphosulfate + diphosphate. The protein operates within sulfur metabolism; hydrogen sulfide biosynthesis; sulfite from sulfate: step 1/3. In terms of biological role, with CysN forms the ATP sulfurylase (ATPS) that catalyzes the adenylation of sulfate producing adenosine 5'-phosphosulfate (APS) and diphosphate, the first enzymatic step in sulfur assimilation pathway. APS synthesis involves the formation of a high-energy phosphoric-sulfuric acid anhydride bond driven by GTP hydrolysis by CysN coupled to ATP hydrolysis by CysD. The sequence is that of Sulfate adenylyltransferase subunit 2 from Shewanella oneidensis (strain ATCC 700550 / JCM 31522 / CIP 106686 / LMG 19005 / NCIMB 14063 / MR-1).